Reading from the N-terminus, the 378-residue chain is tRNA-specific 2-thiouridylase MnmA (378 aa).

ATP is bound by residues Gly-9–Ser-16 and Met-35. The interaction with target base in tRNA stretch occupies residues Asn-94–Asp-96. Residue Cys-99 is the Nucleophile of the active site. Residues Cys-99 and Cys-195 are joined by a disulfide bond. Position 123 (Gly-123) interacts with ATP. The segment at Lys-145–Gln-147 is interaction with tRNA. The Cysteine persulfide intermediate role is filled by Cys-195. The interaction with tRNA stretch occupies residues Arg-307–Tyr-308.

The protein belongs to the MnmA/TRMU family.

The protein localises to the cytoplasm. It catalyses the reaction S-sulfanyl-L-cysteinyl-[protein] + uridine(34) in tRNA + AH2 + ATP = 2-thiouridine(34) in tRNA + L-cysteinyl-[protein] + A + AMP + diphosphate + H(+). Functionally, catalyzes the 2-thiolation of uridine at the wobble position (U34) of tRNA, leading to the formation of s(2)U34. The protein is tRNA-specific 2-thiouridylase MnmA of Xanthomonas oryzae pv. oryzae (strain PXO99A).